Here is a 128-residue protein sequence, read N- to C-terminus: Small ribosomal subunit protein eS8 (128 aa).

Belongs to the eukaryotic ribosomal protein eS8 family. In terms of assembly, part of the 30S ribosomal subunit.

This is Small ribosomal subunit protein eS8 from Methanococcus maripaludis (strain C6 / ATCC BAA-1332).